Consider the following 190-residue polypeptide: Putative 3-methyladenine DNA glycosylase (190 aa).

This sequence belongs to the DNA glycosylase MPG family.

The sequence is that of Putative 3-methyladenine DNA glycosylase from Rubrobacter xylanophilus (strain DSM 9941 / JCM 11954 / NBRC 16129 / PRD-1).